The following is a 459-amino-acid chain: Chromosomal replication initiator protein DnaA (459 aa).

Residues 1–74 are domain I, interacts with DnaA modulators; that stretch reads MQKIETFWYF…DEMAQGHFNE (74 aa). Residues 74–122 form a domain II region; it reads EKIHFKLELKDPAEIKTATIKAPEPKSKEDKKPPTDKAHGTTARKTNPS. The interval 91–123 is disordered; it reads ATIKAPEPKSKEDKKPPTDKAHGTTARKTNPSR. A compositionally biased stretch (basic and acidic residues) spans 96–112; sequence PEPKSKEDKKPPTDKAH. The interval 123 to 339 is domain III, AAA+ region; sequence RLNPAFTFDA…GALKRVLAYS (217 aa). The ATP site is built by G167, G169, K170, and T171. Residues 340–459 are domain IV, binds dsDNA; the sequence is RFTGHPISLD…YSTLIHILRG (120 aa).

Belongs to the DnaA family. In terms of assembly, oligomerizes as a right-handed, spiral filament on DNA at oriC.

The protein resides in the cytoplasm. Plays an essential role in the initiation and regulation of chromosomal replication. ATP-DnaA binds to the origin of replication (oriC) to initiate formation of the DNA replication initiation complex once per cell cycle. Binds the DnaA box (a 9 base pair repeat at the origin) and separates the double-stranded (ds)DNA. Forms a right-handed helical filament on oriC DNA; dsDNA binds to the exterior of the filament while single-stranded (ss)DNA is stabiized in the filament's interior. The ATP-DnaA-oriC complex binds and stabilizes one strand of the AT-rich DNA unwinding element (DUE), permitting loading of DNA polymerase. After initiation quickly degrades to an ADP-DnaA complex that is not apt for DNA replication. Binds acidic phospholipids. This chain is Chromosomal replication initiator protein DnaA, found in Nitrosomonas eutropha (strain DSM 101675 / C91 / Nm57).